A 160-amino-acid polypeptide reads, in one-letter code: Transcription elongation factor GreA (160 aa).

Positions 2-81 form a coiled coil; the sequence is AEKKNILTYE…KNAEVVVEDE (80 aa). The interval 36 to 55 is disordered; that stretch reads KEAREQGDLSENAEYDAAKD.

It belongs to the GreA/GreB family.

Its function is as follows. Necessary for efficient RNA polymerase transcription elongation past template-encoded arresting sites. The arresting sites in DNA have the property of trapping a certain fraction of elongating RNA polymerases that pass through, resulting in locked ternary complexes. Cleavage of the nascent transcript by cleavage factors such as GreA or GreB allows the resumption of elongation from the new 3'terminus. GreA releases sequences of 2 to 3 nucleotides. The protein is Transcription elongation factor GreA of Lachnoclostridium phytofermentans (strain ATCC 700394 / DSM 18823 / ISDg) (Clostridium phytofermentans).